The sequence spans 232 residues: Ribonuclease 3 (232 aa).

The RNase III domain maps to 6–133; sequence FNDIENRLGV…VIAAVYLDKG (128 aa). Glutamate 46 is a Mg(2+) binding site. Aspartate 50 is a catalytic residue. Mg(2+)-binding residues include aspartate 119 and glutamate 122. Glutamate 122 is an active-site residue. The region spanning 160 to 229 is the DRBM domain; that stretch reads DFKTKLQELL…AKEALKRLEK (70 aa).

It belongs to the ribonuclease III family. Homodimer. Mg(2+) serves as cofactor.

The protein localises to the cytoplasm. The catalysed reaction is Endonucleolytic cleavage to 5'-phosphomonoester.. Functionally, digests double-stranded RNA. Involved in the processing of primary rRNA transcript to yield the immediate precursors to the large and small rRNAs (23S and 16S). Processes some mRNAs, and tRNAs when they are encoded in the rRNA operon. Processes pre-crRNA and tracrRNA of type II CRISPR loci if present in the organism. The sequence is that of Ribonuclease 3 from Clostridium botulinum (strain Eklund 17B / Type B).